The following is a 327-amino-acid chain: Phenylalanine--tRNA ligase alpha subunit (327 aa).

Residue E252 participates in Mg(2+) binding.

Belongs to the class-II aminoacyl-tRNA synthetase family. Phe-tRNA synthetase alpha subunit type 1 subfamily. Tetramer of two alpha and two beta subunits. Requires Mg(2+) as cofactor.

It localises to the cytoplasm. It carries out the reaction tRNA(Phe) + L-phenylalanine + ATP = L-phenylalanyl-tRNA(Phe) + AMP + diphosphate + H(+). The chain is Phenylalanine--tRNA ligase alpha subunit from Shewanella baltica (strain OS223).